A 36-amino-acid chain; its full sequence is Putative DNA-binding protein inhibitor ID-2B (36 aa).

This is Putative DNA-binding protein inhibitor ID-2B (ID2B) from Homo sapiens (Human).